The sequence spans 170 residues: RNA pyrophosphohydrolase (170 aa).

The region spanning 6–149 (GFRPNVGIIL…KRDVYRRALK (144 aa)) is the Nudix hydrolase domain. Residues 39–60 (GGIKHNESPENALYRELEEEVG) carry the Nudix box motif.

The protein belongs to the Nudix hydrolase family. RppH subfamily. Requires a divalent metal cation as cofactor.

In terms of biological role, accelerates the degradation of transcripts by removing pyrophosphate from the 5'-end of triphosphorylated RNA, leading to a more labile monophosphorylated state that can stimulate subsequent ribonuclease cleavage. The polypeptide is RNA pyrophosphohydrolase (Saccharophagus degradans (strain 2-40 / ATCC 43961 / DSM 17024)).